Here is an 83-residue protein sequence, read N- to C-terminus: Large ribosomal subunit protein bL27 (83 aa).

Residues 1–22 (MAHKKGQGSTRNGRDSHSKRLG) form a disordered region.

The protein belongs to the bacterial ribosomal protein bL27 family.

The chain is Large ribosomal subunit protein bL27 from Protochlamydia amoebophila (strain UWE25).